The chain runs to 313 residues: 18S rRNA aminocarboxypropyltransferase (313 aa).

Residues 1–30 (MGKGKNKMHEPKNGRPQRGANGHSSRQNHR) form a disordered region. S62, V110, L133, and W148 together coordinate S-adenosyl-L-methionine. Residues 215-228 (KETQERKSRAKEED) are compositionally biased toward basic and acidic residues. The segment at 215-313 (KETQERKSRA…SYDPLGNLIR (99 aa)) is disordered. The span at 237–246 (RRGNGSQSDT) shows a compositional bias: polar residues. Positions 247–257 (SESEENSEQSD) are enriched in acidic residues. 2 positions are modified to phosphoserine: S286 and S289.

The protein belongs to the TDD superfamily. TSR3 family.

Its subcellular location is the cytoplasm. It localises to the nucleus. The enzyme catalyses an N(1)-methylpseudouridine in rRNA + S-adenosyl-L-methionine = N(1)-methyl-N(3)-[(3S)-3-amino-3-carboxypropyl]pseudouridine in rRNA + S-methyl-5'-thioadenosine + H(+). The catalysed reaction is N(1)-methylpseudouridine(1191) in yeast 18S rRNA + S-adenosyl-L-methionine = N(1)-methyl-N(3)-[(3S)-3-amino-3-carboxypropyl]pseudouridine(1191) in yeast 18S rRNA + S-methyl-5'-thioadenosine + H(+). In terms of biological role, aminocarboxypropyltransferase that catalyzes the aminocarboxypropyl transfer on pseudouridine at position 1191 (Psi1191) in 18S rRNA. It constitutes the last step in biosynthesis of the hypermodified N1-methyl-N3-(3-amino-3-carboxypropyl) pseudouridine (m1acp3-Psi) conserved in eukaryotic 18S rRNA. Required for processing 35S pre-rRNA at site D. The protein is 18S rRNA aminocarboxypropyltransferase of Saccharomyces cerevisiae (strain ATCC 204508 / S288c) (Baker's yeast).